Consider the following 250-residue polypeptide: 2,3-bisphosphoglycerate-dependent phosphoglycerate mutase (250 aa).

Substrate is bound by residues 10–17 (RHGESQWN), 23–24 (TG), Arg-62, 89–92 (ERHY), Lys-100, 116–117 (RR), and 185–186 (GN). The active-site Tele-phosphohistidine intermediate is the His-11. The active-site Proton donor/acceptor is Glu-89.

This sequence belongs to the phosphoglycerate mutase family. BPG-dependent PGAM subfamily. Homodimer.

It catalyses the reaction (2R)-2-phosphoglycerate = (2R)-3-phosphoglycerate. It participates in carbohydrate degradation; glycolysis; pyruvate from D-glyceraldehyde 3-phosphate: step 3/5. Functionally, catalyzes the interconversion of 2-phosphoglycerate and 3-phosphoglycerate. The chain is 2,3-bisphosphoglycerate-dependent phosphoglycerate mutase from Sodalis glossinidius (strain morsitans).